Reading from the N-terminus, the 331-residue chain is Biotin synthase (331 aa).

Residues 52 to 277 (PEVEVEGIVS…RTILRYAGGR (226 aa)) form the Radical SAM core domain. 3 residues coordinate [4Fe-4S] cluster: cysteine 67, cysteine 71, and cysteine 74. 3 residues coordinate [2Fe-2S] cluster: cysteine 110, cysteine 202, and arginine 272.

Belongs to the radical SAM superfamily. Biotin synthase family. In terms of assembly, homodimer. [4Fe-4S] cluster is required as a cofactor. [2Fe-2S] cluster serves as cofactor.

It carries out the reaction (4R,5S)-dethiobiotin + (sulfur carrier)-SH + 2 reduced [2Fe-2S]-[ferredoxin] + 2 S-adenosyl-L-methionine = (sulfur carrier)-H + biotin + 2 5'-deoxyadenosine + 2 L-methionine + 2 oxidized [2Fe-2S]-[ferredoxin]. Its pathway is cofactor biosynthesis; biotin biosynthesis; biotin from 7,8-diaminononanoate: step 2/2. Its function is as follows. Catalyzes the conversion of dethiobiotin (DTB) to biotin by the insertion of a sulfur atom into dethiobiotin via a radical-based mechanism. The sequence is that of Biotin synthase from Salinispora tropica (strain ATCC BAA-916 / DSM 44818 / JCM 13857 / NBRC 105044 / CNB-440).